The chain runs to 1816 residues: uncharacterized protein (1816 aa).

Disordered regions lie at residues 338–357 and 562–605; these read DSSSSSSNNNNNNNNNNNNN and ELEK…IKPK. Positions 339 to 357 are enriched in low complexity; the sequence is SSSSSSNNNNNNNNNNNNN. A compositionally biased stretch (basic and acidic residues) spans 562-577; the sequence is ELEKERIKKEKEDSKK. The segment covering 581 to 603 has biased composition (low complexity); the sequence is KQSSSSSSSSTTTTSTTTSSTIK. Positions 826 to 999 constitute a Helicase ATP-binding domain; that stretch reads LDIVDKRESA…FLKKIDPNRK (174 aa). 839 to 846 provides a ligand contact to ATP; it reads ASTSSGKT. The DEAH box motif lies at 949–952; the sequence is DEVH. In terms of domain architecture, Helicase C-terminal spans 1198–1379; it reads QLDLVIERFQ…SVVSPSLCLS (182 aa). A disordered region spans residues 1388–1487; it reads TNGSANKSNE…TTTKTPTTTS (100 aa). A compositionally biased stretch (basic and acidic residues) spans 1395 to 1427; the sequence is SNEENKVQVKENEKEREKEKEKEKEKEKEKETI. The span at 1445-1454 shows a compositional bias: acidic residues; the sequence is NWDDDEEETA. Low complexity predominate over residues 1456–1487; that stretch reads STKTTPATTPTTTTTENTPATTTTTKTPTTTS.

This sequence belongs to the helicase family. SKI2 subfamily.

The protein resides in the nucleus. This is an uncharacterized protein from Dictyostelium discoideum (Social amoeba).